The chain runs to 608 residues: Chaperone protein HtpG (608 aa).

The tract at residues 1 to 332 (MQFQTEVNQL…VEDLPLNVSR (332 aa)) is a; substrate-binding. Residues 333-536 (EILQENQILK…KNKPDFAMQQ (204 aa)) are b. The segment at 537 to 608 (LLKQMGQEQN…LTKIINKAFS (72 aa)) is c.

This sequence belongs to the heat shock protein 90 family. As to quaternary structure, homodimer.

It is found in the cytoplasm. Functionally, molecular chaperone. Has ATPase activity. The sequence is that of Chaperone protein HtpG from Campylobacter jejuni subsp. jejuni serotype O:23/36 (strain 81-176).